Here is a 444-residue protein sequence, read N- to C-terminus: Mitogen-activated protein kinase mpk-1 (444 aa).

Polar residues-rich tracts occupy residues 1–17 (MPTWIPNNLCAQPTTRN) and 24–56 (GHPQATQQQSAPGSLAYRNSSNIPNGATNHVRQ). Residues 1 to 56 (MPTWIPNNLCAQPTTRNAKPPSNGHPQATQQQSAPGSLAYRNSSNIPNGATNHVRQ) form a disordered region. The Protein kinase domain maps to 96 to 384 (YVNLSYIGEG…IEQALAHPYL (289 aa)). ATP is bound by residues 102-110 (IGEGAYGMV) and K125. Catalysis depends on D220, which acts as the Proton acceptor. The residue at position 256 (T256) is a Phosphothreonine. Positions 256-258 (TEY) match the TXY motif. Position 258 is a phosphotyrosine (Y258).

Belongs to the protein kinase superfamily. CMGC Ser/Thr protein kinase family. MAP kinase subfamily. In terms of assembly, isoform a interacts with gck-1 (via N-terminus). The cofactor is Mg(2+). Post-translationally, isoform a is phosphorylated at the pachytene stage during oogenesis and is negatively regulated by gck-1. Isoform b is phosphorylated in proximal oocytes. In terms of tissue distribution, expressed in cells lining the rectum. Isoform a is expressed in nervous system, body wall muscles and posterior intestine. Isoform b expression may be restricted to germline.

The enzyme catalyses L-seryl-[protein] + ATP = O-phospho-L-seryl-[protein] + ADP + H(+). It catalyses the reaction L-threonyl-[protein] + ATP = O-phospho-L-threonyl-[protein] + ADP + H(+). With respect to regulation, activated by dual phosphorylation at Thr-256 and Tyr-258. May be inactivated by lip-1-mediated dephosphorylation. Functionally, functions in let-60 Ras signaling pathway; acts downstream of lin-45 raf kinase, but before the lin-1 gene product in controlling vulval cell differentiation. Plays a negative role in proximal germline proliferation in the mitotic zone. Required for progression of developing oocytes through the pachytene stage, perhaps acting after efl-1/dpl-1-mediated gene activation and before gld-1 down-regulation. May play a role in global X chromosome reactivation or be indirectly required for progression of germ cells through meiosis to the point where X reactivation occurs. In oocytes, inhibits the activity of the chloride channel clh-3, likely by activating gck-3. Plays a role in response to M.nematophilum-mediated bacterial infection by promoting tail swelling and preventing constipation. Involved in fluid homeostasis. In addition, involved in the up-regulation of lysozyme ilys-3 expression in the intestine in responses to M.nematophilum-mediated bacterial infection. By phosphorylating transcription factor skn-1 (isoform c) may play a role in increasing life span downstream of lin-45, let-60 and mek-2. By up-regulating cep-1 and down-regulating gld-1 expression in the late pachytene stage, plays a role in germline apoptosis in response to DNA damage. Regulates egl-1 expression in response to DNA damage, probably upstream of cep-1. In terms of biological role, suppresses germline tumor formation by preventing the dedifferentiation of secondary spermatocytes probably upstream of rskn-1. The sequence is that of Mitogen-activated protein kinase mpk-1 (mpk-1) from Caenorhabditis elegans.